The chain runs to 84 residues: U4-theraphotoxin-Hhn1a (84 aa).

Residues 1 to 22 (MKVTLIAILTCAAVLVLHTTAA) form the signal peptide. A propeptide spanning residues 23–47 (EELEESQLMEVGMPDTELAAVDGER) is cleaved from the precursor. 3 cysteine pairs are disulfide-bonded: Cys-51–Cys-65, Cys-55–Cys-76, and Cys-70–Cys-81.

Belongs to the neurotoxin 12 (Hwtx-2) family. 02 (Hwtx-2) subfamily. In terms of tissue distribution, expressed by the venom gland.

It localises to the secreted. Postsynaptic neurotoxin. The chain is U4-theraphotoxin-Hhn1a from Cyriopagopus hainanus (Chinese bird spider).